We begin with the raw amino-acid sequence, 334 residues long: BRISC and BRCA1-A complex member 1 (334 aa).

The residue at position 1 (Met-1) is an N-acetylmethionine. The tract at residues 1–79 (MEVAEANSPT…VPGAVPKPWQ (79 aa)) is disordered. Ser-8 carries the post-translational modification Phosphoserine. Residues 10–25 (TEEEEEEEEEEGEEPI) are compositionally biased toward acidic residues. Phosphoserine is present on residues Ser-34 and Ser-54. The segment covering 59–68 (EAATADDGAA) has biased composition (low complexity). A VWFA-like region spans residues 100–303 (VIICLDLSEE…LELHNCVAKL (204 aa)).

This sequence belongs to the BABAM1 family. Component of the ARISC complex, at least composed of UIMC1/RAP80, ABRAXAS1, BRCC3/BRCC36, BABAM2 and BABAM1/NBA1. Component of the BRCA1-A complex, at least composed of BRCA1, BARD1, UIMC1/RAP80, ABRAXAS1, BRCC3/BRCC36, BABAM2 and BABAM1/NBA1. In the BRCA1-A complex, interacts directly with ABRAXAS1 and BABAM2. Component of the BRISC complex, at least composed of ABRAXAS2, BRCC3/BRCC36, BABAM2 and BABAM1/NBA1. Identified in a complex with SHMT2 and the other subunits of the BRISC complex.

The protein resides in the cytoplasm. The protein localises to the nucleus. Component of the BRCA1-A complex, a complex that specifically recognizes 'Lys-63'-linked ubiquitinated histones H2A and H2AX at DNA lesions sites, leading to target the BRCA1-BARD1 heterodimer to sites of DNA damage at double-strand breaks (DSBs). The BRCA1-A complex also possesses deubiquitinase activity that specifically removes 'Lys-63'-linked ubiquitin on histones H2A and H2AX. In the BRCA1-A complex, it is required for the complex integrity and its localization at DSBs. Component of the BRISC complex, a multiprotein complex that specifically cleaves 'Lys-63'-linked ubiquitin in various substrates. In these 2 complexes, it is probably required to maintain the stability of BABAM2 and help the 'Lys-63'-linked deubiquitinase activity mediated by BRCC3/BRCC36 component. The BRISC complex is required for normal mitotic spindle assembly and microtubule attachment to kinetochores via its role in deubiquitinating NUMA1. Plays a role in interferon signaling via its role in the deubiquitination of the interferon receptor IFNAR1; deubiquitination increases IFNAR1 activity by enhancing its stability and cell surface expression. Down-regulates the response to bacterial lipopolysaccharide (LPS) via its role in IFNAR1 deubiquitination. The sequence is that of BRISC and BRCA1-A complex member 1 (Babam1) from Rattus norvegicus (Rat).